Consider the following 198-residue polypeptide: uncharacterized protein (198 aa).

Residues 40–111 (GSALPPQAPT…LSRGAGQGAP (72 aa)) form a disordered region. Positions 60-74 (SSRTPGPRPPRSTLR) are enriched in low complexity.

This is an uncharacterized protein from Homo sapiens (Human).